Here is a 716-residue protein sequence, read N- to C-terminus: Splicing factor Cactin (716 aa).

The disordered stretch occupies residues 1–104; the sequence is MGSHGKGKRD…SKKAQKKALR (104 aa). A compositionally biased stretch (basic and acidic residues) spans 10–22; it reads DRSGRQKKRRDES. Residues 25 to 45 are compositionally biased toward low complexity; it reads GSESESYTSDSDGSDDLSPPR. Residues 46–61 are compositionally biased toward basic residues; it reads SSRRKKGSSSRRTRRR. Residues 81-95 show a composition bias toward basic and acidic residues; that stretch reads SSKDYSEEKVTEYMS. The stretch at 153-201 forms a coiled coil; that stretch reads SVKAEKRRHRERMTEVEKVKKRREERAVEKARHEEEMALLARERARAEF. S450 is subject to Phosphoserine. The interval 466-525 is disordered; it reads VEENEEEINDTNLSDAEEAFSPEPVAEEEEADEAAEAAGSFSPELMHGDDREEAIDPEED. Positions 468–500 are enriched in acidic residues; that stretch reads ENEEEINDTNLSDAEEAFSPEPVAEEEEADEAA.

Belongs to the CACTIN family. In terms of assembly, interacts with At5g63440.

The protein localises to the nucleus speckle. Functionally, plays a role in pre-mRNA splicing by facilitating excision of a subset of introns. Required for embryogenesis. In Arabidopsis thaliana (Mouse-ear cress), this protein is Splicing factor Cactin (CTN).